We begin with the raw amino-acid sequence, 271 residues long: Phosphonates import ATP-binding protein PhnC 2 (271 aa).

The ABC transporter domain maps to 2–246; the sequence is LTVDNLEKTY…ARDEIYRGGE (245 aa). 35-42 contacts ATP; it reads GPSGAGKS. Residues 243-254 show a composition bias toward basic and acidic residues; that stretch reads RGGESIADREEP. The segment at 243–271 is disordered; it reads RGGESIADREEPSAGNSTDADDVIAERGD.

It belongs to the ABC transporter superfamily. Phosphonates importer (TC 3.A.1.9.1) family. The complex is composed of two ATP-binding proteins (PhnC), two transmembrane proteins (PhnE) and a solute-binding protein (PhnD).

Its subcellular location is the cell membrane. It catalyses the reaction phosphonate(out) + ATP + H2O = phosphonate(in) + ADP + phosphate + H(+). Functionally, part of the ABC transporter complex PhnCDE involved in phosphonates import. Responsible for energy coupling to the transport system. This Haloarcula marismortui (strain ATCC 43049 / DSM 3752 / JCM 8966 / VKM B-1809) (Halobacterium marismortui) protein is Phosphonates import ATP-binding protein PhnC 2.